The following is a 151-amino-acid chain: Putative pre-16S rRNA nuclease (151 aa).

This sequence belongs to the YqgF nuclease family.

It localises to the cytoplasm. Could be a nuclease involved in processing of the 5'-end of pre-16S rRNA. This chain is Putative pre-16S rRNA nuclease, found in Prochlorococcus marinus subsp. pastoris (strain CCMP1986 / NIES-2087 / MED4).